Consider the following 422-residue polypeptide: MLAWPAPLLPTLPGSGPVLTLHDTARGEVVPTTPDTTARMYVCGITPYDATHLGHAATYLAFDLVNRVWRDAGHAVHYVQNVTDIDDPLLERAERDGEDWVVLGMRETALFREDMTALRVLPPDDYVGAVESVPRIVAHVETLLDEGLAYVLDDGTGDVYHDIAQAPGFGSESGYDEATMLRFSAERGGDPDRPGKRNRLDPMLWRGRRPGEPSWPGPRGVAGRPGWHIECATIALETIGMGFDVQGGGSDLVFPHHEFSAVHAEALTATVTGEKLPFARAYVHAAMIGLDGEKMSKSRGNLVFVSKLRGEGVDPMAIRLALLAGHYRTDRAWTPDLLAGAEQRLATWRRAVTRDAGAPAAEVLQGLRERLADDLDSPGAIALVDAWAERTLAATADEQEEGAPTIVCDAVDALLGVALQGC.

Position 43 (Cys-43) interacts with Zn(2+). L-cysteinyl-5'-AMP-binding positions include 43–46 (CGIT), Thr-58, and 81–83 (NVT). The 'HIGH' region signature appears at 45 to 55 (ITPYDATHLGH). Residues 185–200 (AERGGDPDRPGKRNRL) show a composition bias toward basic and acidic residues. The disordered stretch occupies residues 185 to 221 (AERGGDPDRPGKRNRLDPMLWRGRRPGEPSWPGPRGV). The short motif at 186 to 191 (ERGGDP) is the 'ERGGDP' region element. Trp-227 is a binding site for L-cysteinyl-5'-AMP. Cys-231 lines the Zn(2+) pocket. 249 to 251 (GSD) contacts L-cysteinyl-5'-AMP. His-256 contacts Zn(2+). Ile-288 is a binding site for L-cysteinyl-5'-AMP. A 'KMSKS' region motif is present at residues 294-298 (KMSKS).

Belongs to the class-I aminoacyl-tRNA synthetase family. MshC subfamily. In terms of assembly, monomer. Requires Zn(2+) as cofactor.

It catalyses the reaction 1D-myo-inositol 2-amino-2-deoxy-alpha-D-glucopyranoside + L-cysteine + ATP = 1D-myo-inositol 2-(L-cysteinylamino)-2-deoxy-alpha-D-glucopyranoside + AMP + diphosphate + H(+). Functionally, catalyzes the ATP-dependent condensation of GlcN-Ins and L-cysteine to form L-Cys-GlcN-Ins. The chain is L-cysteine:1D-myo-inositol 2-amino-2-deoxy-alpha-D-glucopyranoside ligase from Geodermatophilus obscurus (strain ATCC 25078 / DSM 43160 / JCM 3152 / CCUG 61914 / KCC A-0152 / KCTC 9177 / NBRC 13315 / NRRL B-3577 / G-20).